The sequence spans 177 residues: Large ribosomal subunit protein uL6 (177 aa).

This sequence belongs to the universal ribosomal protein uL6 family. As to quaternary structure, part of the 50S ribosomal subunit.

This protein binds to the 23S rRNA, and is important in its secondary structure. It is located near the subunit interface in the base of the L7/L12 stalk, and near the tRNA binding site of the peptidyltransferase center. This is Large ribosomal subunit protein uL6 from Acidovorax ebreus (strain TPSY) (Diaphorobacter sp. (strain TPSY)).